A 240-amino-acid polypeptide reads, in one-letter code: Tubulin alpha chain (240 aa).

Asn-17 contacts GTP. The active site involves Glu-43.

It belongs to the tubulin family. Dimer of alpha and beta chains. A typical microtubule is a hollow water-filled tube with an outer diameter of 25 nm and an inner diameter of 15 nM. Alpha-beta heterodimers associate head-to-tail to form protofilaments running lengthwise along the microtubule wall with the beta-tubulin subunit facing the microtubule plus end conferring a structural polarity. Microtubules usually have 13 protofilaments but different protofilament numbers can be found in some organisms and specialized cells. The cofactor is Mg(2+). In terms of processing, undergoes a tyrosination/detyrosination cycle, the cyclic removal and re-addition of a C-terminal tyrosine residue by the enzymes tubulin tyrosine carboxypeptidase (TTCP) and tubulin tyrosine ligase (TTL), respectively.

It localises to the cytoplasm. It is found in the cytoskeleton. The catalysed reaction is GTP + H2O = GDP + phosphate + H(+). Tubulin is the major constituent of microtubules, a cylinder consisting of laterally associated linear protofilaments composed of alpha- and beta-tubulin heterodimers. Microtubules grow by the addition of GTP-tubulin dimers to the microtubule end, where a stabilizing cap forms. Below the cap, tubulin dimers are in GDP-bound state, owing to GTPase activity of alpha-tubulin. The sequence is that of Tubulin alpha chain from Octopus vulgaris (Common octopus).